Reading from the N-terminus, the 559-residue chain is Dihydroxy-acid dehydratase (559 aa).

Residue Cys52 participates in [2Fe-2S] cluster binding. Mg(2+) is bound at residue Asp84. Cys125 is a binding site for [2Fe-2S] cluster. Mg(2+) contacts are provided by Asp126 and Lys127. Lys127 is modified (N6-carboxylysine). Cys197 is a [2Fe-2S] cluster binding site. Residue Glu447 participates in Mg(2+) binding. Ser473 acts as the Proton acceptor in catalysis.

The protein belongs to the IlvD/Edd family. As to quaternary structure, homodimer. [2Fe-2S] cluster serves as cofactor. It depends on Mg(2+) as a cofactor.

It carries out the reaction (2R)-2,3-dihydroxy-3-methylbutanoate = 3-methyl-2-oxobutanoate + H2O. It catalyses the reaction (2R,3R)-2,3-dihydroxy-3-methylpentanoate = (S)-3-methyl-2-oxopentanoate + H2O. It functions in the pathway amino-acid biosynthesis; L-isoleucine biosynthesis; L-isoleucine from 2-oxobutanoate: step 3/4. The protein operates within amino-acid biosynthesis; L-valine biosynthesis; L-valine from pyruvate: step 3/4. Functionally, functions in the biosynthesis of branched-chain amino acids. Catalyzes the dehydration of (2R,3R)-2,3-dihydroxy-3-methylpentanoate (2,3-dihydroxy-3-methylvalerate) into 2-oxo-3-methylpentanoate (2-oxo-3-methylvalerate) and of (2R)-2,3-dihydroxy-3-methylbutanoate (2,3-dihydroxyisovalerate) into 2-oxo-3-methylbutanoate (2-oxoisovalerate), the penultimate precursor to L-isoleucine and L-valine, respectively. The protein is Dihydroxy-acid dehydratase of Roseiflexus sp. (strain RS-1).